The sequence spans 59 residues: Ribosome biogenesis protein Nop10 (59 aa).

It belongs to the NOP10 family.

Its function is as follows. Involved in ribosome biogenesis; more specifically in 18S rRNA pseudouridylation and in cleavage of pre-rRNA. In Thermococcus sibiricus (strain DSM 12597 / MM 739), this protein is Ribosome biogenesis protein Nop10.